A 270-amino-acid polypeptide reads, in one-letter code: Phosphatidate cytidylyltransferase (270 aa).

7 consecutive transmembrane segments (helical) span residues 19 to 39 (LWLTWVGGVGFTLFSIAIGLA), 53 to 73 (TAFSRLFGWAWLIVTGILLIL), 76 to 96 (GALLTIGFLVAGCAILLVTQW), 101 to 121 (GWPAAGLFYAGFSALSLSLLR), 126 to 146 (FGFTTIVFLFAVVWSTDIAAY), 183 to 203 (LVASLVAAPGGWGVPVLALLL), and 248 to 268 (ALLYLFGAIFAEPDVPSAIFF).

Belongs to the CDS family.

It is found in the cell inner membrane. It catalyses the reaction a 1,2-diacyl-sn-glycero-3-phosphate + CTP + H(+) = a CDP-1,2-diacyl-sn-glycerol + diphosphate. It functions in the pathway phospholipid metabolism; CDP-diacylglycerol biosynthesis; CDP-diacylglycerol from sn-glycerol 3-phosphate: step 3/3. This is Phosphatidate cytidylyltransferase (cdsA) from Brucella suis biovar 1 (strain 1330).